A 271-amino-acid polypeptide reads, in one-letter code: Shikimate dehydrogenase (NADP(+)) (271 aa).

Shikimate contacts are provided by residues 16-18 and threonine 63; that span reads SRS. The Proton acceptor role is filled by lysine 67. Shikimate contacts are provided by asparagine 88 and aspartate 104. Residues 128–132, 152–157, and methionine 215 contribute to the NADP(+) site; these read GAGGA and NRTASK. Residue tyrosine 217 coordinates shikimate. Glycine 238 contributes to the NADP(+) binding site.

This sequence belongs to the shikimate dehydrogenase family. In terms of assembly, homodimer.

The catalysed reaction is shikimate + NADP(+) = 3-dehydroshikimate + NADPH + H(+). Its pathway is metabolic intermediate biosynthesis; chorismate biosynthesis; chorismate from D-erythrose 4-phosphate and phosphoenolpyruvate: step 4/7. Functionally, involved in the biosynthesis of the chorismate, which leads to the biosynthesis of aromatic amino acids. Catalyzes the reversible NADPH linked reduction of 3-dehydroshikimate (DHSA) to yield shikimate (SA). In Chromohalobacter salexigens (strain ATCC BAA-138 / DSM 3043 / CIP 106854 / NCIMB 13768 / 1H11), this protein is Shikimate dehydrogenase (NADP(+)).